The following is a 385-amino-acid chain: tRNA-specific 2-thiouridylase MnmA (385 aa).

ATP contacts are provided by residues 29-36 (GLSGGVDS) and leucine 55. Catalysis depends on cysteine 116, which acts as the Nucleophile. Cysteine 116 and cysteine 225 are joined by a disulfide. Residue glycine 141 participates in ATP binding. The segment at 175 to 177 (KDQ) is interaction with tRNA. The Cysteine persulfide intermediate role is filled by cysteine 225. The tract at residues 330–331 (RY) is interaction with tRNA.

It belongs to the MnmA/TRMU family.

The protein localises to the cytoplasm. The catalysed reaction is S-sulfanyl-L-cysteinyl-[protein] + uridine(34) in tRNA + AH2 + ATP = 2-thiouridine(34) in tRNA + L-cysteinyl-[protein] + A + AMP + diphosphate + H(+). Functionally, catalyzes the 2-thiolation of uridine at the wobble position (U34) of tRNA, leading to the formation of s(2)U34. In Prochlorococcus marinus (strain MIT 9301), this protein is tRNA-specific 2-thiouridylase MnmA.